Consider the following 194-residue polypeptide: Ion-translocating oxidoreductase complex subunit A (194 aa).

A run of 6 helical transmembrane segments spans residues 1–21 (MVMH…FILV), 48–68 (CVIV…LIPF), 73–93 (LCTM…EIIV), 103–123 (LLGI…IPLM), 135–155 (VLYG…FSSI), and 172–192 (PIAL…DGLI).

The protein belongs to the NqrDE/RnfAE family. As to quaternary structure, the complex is composed of six subunits: RnfA, RnfB, RnfC, RnfD, RnfE and RnfG.

The protein resides in the cell inner membrane. In terms of biological role, part of a membrane-bound complex that couples electron transfer with translocation of ions across the membrane. The polypeptide is Ion-translocating oxidoreductase complex subunit A (Buchnera aphidicola subsp. Baizongia pistaciae (strain Bp)).